A 456-amino-acid polypeptide reads, in one-letter code: Bifunctional protein GlmU (456 aa).

The segment at 1–228 is pyrophosphorylase; that stretch reads MTLPLHVLIL…PQDVEGANDP (228 aa). Residues 10-13, Lys24, Gln76, 81-82, 103-105, Gly138, Glu153, Asn168, and Asn226 contribute to the UDP-N-acetyl-alpha-D-glucosamine site; these read LAAG, GT, and YGD. Asp105 lines the Mg(2+) pocket. Asn226 lines the Mg(2+) pocket. Positions 229 to 249 are linker; that stretch reads WQLAQLERAWQLRAARTLCLQ. An N-acetyltransferase region spans residues 250–456; that stretch reads GVRMADPARV…GWKRPTKKSP (207 aa). Residues Arg332 and Lys350 each contribute to the UDP-N-acetyl-alpha-D-glucosamine site. The Proton acceptor role is filled by His362. UDP-N-acetyl-alpha-D-glucosamine contacts are provided by Tyr365 and Asn376. Acetyl-CoA contacts are provided by residues Ala379, 385–386, Ser404, Ala422, and Arg439; that span reads NY.

In the N-terminal section; belongs to the N-acetylglucosamine-1-phosphate uridyltransferase family. It in the C-terminal section; belongs to the transferase hexapeptide repeat family. In terms of assembly, homotrimer. The cofactor is Mg(2+).

Its subcellular location is the cytoplasm. The enzyme catalyses alpha-D-glucosamine 1-phosphate + acetyl-CoA = N-acetyl-alpha-D-glucosamine 1-phosphate + CoA + H(+). The catalysed reaction is N-acetyl-alpha-D-glucosamine 1-phosphate + UTP + H(+) = UDP-N-acetyl-alpha-D-glucosamine + diphosphate. It functions in the pathway nucleotide-sugar biosynthesis; UDP-N-acetyl-alpha-D-glucosamine biosynthesis; N-acetyl-alpha-D-glucosamine 1-phosphate from alpha-D-glucosamine 6-phosphate (route II): step 2/2. It participates in nucleotide-sugar biosynthesis; UDP-N-acetyl-alpha-D-glucosamine biosynthesis; UDP-N-acetyl-alpha-D-glucosamine from N-acetyl-alpha-D-glucosamine 1-phosphate: step 1/1. The protein operates within bacterial outer membrane biogenesis; LPS lipid A biosynthesis. Catalyzes the last two sequential reactions in the de novo biosynthetic pathway for UDP-N-acetylglucosamine (UDP-GlcNAc). The C-terminal domain catalyzes the transfer of acetyl group from acetyl coenzyme A to glucosamine-1-phosphate (GlcN-1-P) to produce N-acetylglucosamine-1-phosphate (GlcNAc-1-P), which is converted into UDP-GlcNAc by the transfer of uridine 5-monophosphate (from uridine 5-triphosphate), a reaction catalyzed by the N-terminal domain. The protein is Bifunctional protein GlmU of Xanthomonas axonopodis pv. citri (strain 306).